Here is a 226-residue protein sequence, read N- to C-terminus: ATP-dependent dethiobiotin synthetase BioD (226 aa).

Position 12 to 17 (12 to 17 (GIGKTV)) interacts with ATP. Thr16 provides a ligand contact to Mg(2+). The active site involves Lys37. A substrate-binding site is contributed by Thr41. ATP contacts are provided by residues Asp49, 108–111 (EGAG), and 197–199 (PAG). 2 residues coordinate Mg(2+): Asp49 and Glu108.

Belongs to the dethiobiotin synthetase family. As to quaternary structure, homodimer. Mg(2+) is required as a cofactor.

Its subcellular location is the cytoplasm. It carries out the reaction (7R,8S)-7,8-diammoniononanoate + CO2 + ATP = (4R,5S)-dethiobiotin + ADP + phosphate + 3 H(+). Its pathway is cofactor biosynthesis; biotin biosynthesis; biotin from 7,8-diaminononanoate: step 1/2. Catalyzes a mechanistically unusual reaction, the ATP-dependent insertion of CO2 between the N7 and N8 nitrogen atoms of 7,8-diaminopelargonic acid (DAPA, also called 7,8-diammoniononanoate) to form a ureido ring. The polypeptide is ATP-dependent dethiobiotin synthetase BioD (Mycolicibacterium vanbaalenii (strain DSM 7251 / JCM 13017 / BCRC 16820 / KCTC 9966 / NRRL B-24157 / PYR-1) (Mycobacterium vanbaalenii)).